A 267-amino-acid chain; its full sequence is Tryptophan synthase alpha chain (267 aa).

Active-site proton acceptor residues include Glu-49 and Asp-60.

The protein belongs to the TrpA family. As to quaternary structure, tetramer of two alpha and two beta chains.

It carries out the reaction (1S,2R)-1-C-(indol-3-yl)glycerol 3-phosphate + L-serine = D-glyceraldehyde 3-phosphate + L-tryptophan + H2O. It functions in the pathway amino-acid biosynthesis; L-tryptophan biosynthesis; L-tryptophan from chorismate: step 5/5. Its function is as follows. The alpha subunit is responsible for the aldol cleavage of indoleglycerol phosphate to indole and glyceraldehyde 3-phosphate. This Cyanothece sp. (strain PCC 7425 / ATCC 29141) protein is Tryptophan synthase alpha chain.